The following is a 255-amino-acid chain: Small ribosomal subunit protein uS2 (255 aa).

The interval 232 to 255 (ASGRDIGASEEAPIEPALEDEAGA) is disordered.

This sequence belongs to the universal ribosomal protein uS2 family.

The protein is Small ribosomal subunit protein uS2 of Agrobacterium fabrum (strain C58 / ATCC 33970) (Agrobacterium tumefaciens (strain C58)).